Here is an 809-residue protein sequence, read N- to C-terminus: Chorion peroxidase (809 aa).

The N-terminal stretch at 1 to 21 (MSRILFILLLLIVTQLSELQA) is a signal peptide. Residues 22 to 223 (AAFSVRQNRF…KFTETPLAHH (202 aa)) constitute a propeptide that is removed on maturation. The segment at 36–55 (DLQTPAPLATSTESSKKPEK) is disordered. Asn110 is a glycosylation site (N-linked (GlcNAc...) asparagine). N-acetylcysteine; in Chorion peroxidase light chain is present on Cys224. The cysteines at positions 230 and 244 are disulfide-linked. His320 functions as the Proton acceptor in the catalytic mechanism. An intrachain disulfide couples Cys448 to Cys457. His568 provides a ligand contact to heme b. Cys765 and Cys794 are disulfide-bonded.

It belongs to the peroxidase family. XPO subfamily. As to quaternary structure, heterodimer. The cofactor is heme b. Expressed at low levels in the germarium and early follicles. Expression becomes progressively stronger during vitellogenesis, and is highly expressed in germ cells and somatic cells. A subset of follicle cells, termed border cells (BC), exhibit a high level of expression.

It localises to the secreted. The enzyme catalyses 2 a phenolic donor + H2O2 = 2 a phenolic radical donor + 2 H2O. Required for ovarian follicle maturation. Involved in the formation of a rigid and insoluble egg chorion by catalyzing chorion protein cross-linking through dityrosine formation and phenol oxidase-catalyzed chorion melanization. The chain is Chorion peroxidase (Pxt) from Drosophila melanogaster (Fruit fly).